The following is a 178-amino-acid chain: uncharacterized protein (178 aa).

This is an uncharacterized protein from Saccharolobus islandicus (Sulfolobus islandicus).